The chain runs to 508 residues: Photosystem II CP47 reaction center protein (508 aa).

The next 6 helical transmembrane spans lie at 21-36 (AVHI…WAGS), 101-115 (IVFS…IWHW), 140-156 (GIHL…FGAF), 203-218 (IAAG…FHLS), 237-252 (VLSS…AFVV), and 457-472 (TFAL…HGAR).

It belongs to the PsbB/PsbC family. PsbB subfamily. As to quaternary structure, PSII is composed of 1 copy each of membrane proteins PsbA, PsbB, PsbC, PsbD, PsbE, PsbF, PsbH, PsbI, PsbJ, PsbK, PsbL, PsbM, PsbT, PsbX, PsbY, PsbZ, Psb30/Ycf12, at least 3 peripheral proteins of the oxygen-evolving complex and a large number of cofactors. It forms dimeric complexes. Requires Binds multiple chlorophylls. PSII binds additional chlorophylls, carotenoids and specific lipids. as cofactor.

It localises to the plastid. It is found in the chloroplast thylakoid membrane. In terms of biological role, one of the components of the core complex of photosystem II (PSII). It binds chlorophyll and helps catalyze the primary light-induced photochemical processes of PSII. PSII is a light-driven water:plastoquinone oxidoreductase, using light energy to abstract electrons from H(2)O, generating O(2) and a proton gradient subsequently used for ATP formation. This Triticum aestivum (Wheat) protein is Photosystem II CP47 reaction center protein.